Here is a 313-residue protein sequence, read N- to C-terminus: Aspartate carbamoyltransferase catalytic subunit (313 aa).

Carbamoyl phosphate-binding residues include Arg-58 and Thr-59. Lys-86 lines the L-aspartate pocket. The carbamoyl phosphate site is built by Arg-108, His-136, and Gln-139. L-aspartate is bound by residues Arg-169 and Arg-223. Positions 264 and 265 each coordinate carbamoyl phosphate.

The protein belongs to the aspartate/ornithine carbamoyltransferase superfamily. ATCase family. In terms of assembly, heterododecamer (2C3:3R2) of six catalytic PyrB chains organized as two trimers (C3), and six regulatory PyrI chains organized as three dimers (R2).

The catalysed reaction is carbamoyl phosphate + L-aspartate = N-carbamoyl-L-aspartate + phosphate + H(+). It functions in the pathway pyrimidine metabolism; UMP biosynthesis via de novo pathway; (S)-dihydroorotate from bicarbonate: step 2/3. Functionally, catalyzes the condensation of carbamoyl phosphate and aspartate to form carbamoyl aspartate and inorganic phosphate, the committed step in the de novo pyrimidine nucleotide biosynthesis pathway. This chain is Aspartate carbamoyltransferase catalytic subunit, found in Ruminiclostridium cellulolyticum (strain ATCC 35319 / DSM 5812 / JCM 6584 / H10) (Clostridium cellulolyticum).